A 243-amino-acid chain; its full sequence is Putative ABC transporter arginine-binding protein 2 (243 aa).

Residues 1 to 19 (MKKVLIAALIAGFSLSATA) form the signal peptide.

It belongs to the bacterial solute-binding protein 3 family. The complex is composed of two ATP-binding proteins (ArtP), two transmembrane proteins (ArtM and ArtQ) and two solute-binding proteins (ArtJ and ArtI).

Its subcellular location is the periplasm. Part of the ABC transporter complex ArtPIQMJ involved in arginine transport. The sequence is that of Putative ABC transporter arginine-binding protein 2 (artI) from Escherichia coli (strain K12).